We begin with the raw amino-acid sequence, 147 residues long: Large ribosomal subunit protein uL15 (147 aa).

The segment at 1–57 (MDLSNLSPAPGSTKARKRLGRGPGSGNGTTAGRGNKGHNSRSGGGVRPGFEGGQMPL) is disordered. Composition is skewed to gly residues over residues 21 to 31 (RGPGSGNGTTA) and 42 to 52 (SGGGVRPGFEG).

Belongs to the universal ribosomal protein uL15 family. As to quaternary structure, part of the 50S ribosomal subunit.

Binds to the 23S rRNA. The polypeptide is Large ribosomal subunit protein uL15 (Desulfosudis oleivorans (strain DSM 6200 / JCM 39069 / Hxd3) (Desulfococcus oleovorans)).